A 349-amino-acid chain; its full sequence is Ethyl acetate hydrolase (349 aa).

The region spanning 67-300 is the AB hydrolase-1 domain; that stretch reads YIGEGRALDP…SHDQFFTVDD (234 aa). Catalysis depends on serine 139, which acts as the Nucleophile. Residues aspartate 293 and histidine 322 contribute to the active site.

Belongs to the AB hydrolase superfamily. Acetyl esterase family. As to quaternary structure, homodimer.

It carries out the reaction ethyl acetate + H2O = ethanol + acetate + H(+). In terms of biological role, esterase that catalyzes the hydrolysis of ethyl acetate. Involved in the degradation of short chain methyl ketones (MEK) such as 2-butanone and 2-hexanone. In vitro, can also hydrolyze vinyl acetate, 4-nitrophenyl acetate, methyl acetate, propyl acetate, benzyl acetate and methyl propionate. The highest activities are obtained with acetic acid esters, but the alcohol group also plays an important role, as compounds with two carbon atoms in the alcohol moiety, i.e., vinyl and ethyl acetate, are by far the preferred substrates. The protein is Ethyl acetate hydrolase of Pseudomonas veronii.